The sequence spans 225 residues: Imidazoleglycerol-phosphate dehydratase (225 aa).

This sequence belongs to the imidazoleglycerol-phosphate dehydratase family.

It carries out the reaction D-erythro-1-(imidazol-4-yl)glycerol 3-phosphate = 3-(imidazol-4-yl)-2-oxopropyl phosphate + H2O. It functions in the pathway amino-acid biosynthesis; L-histidine biosynthesis; L-histidine from 5-phospho-alpha-D-ribose 1-diphosphate: step 6/9. The sequence is that of Imidazoleglycerol-phosphate dehydratase (PTH3) from Pyricularia oryzae (strain 70-15 / ATCC MYA-4617 / FGSC 8958) (Rice blast fungus).